The sequence spans 156 residues: Small ribosomal subunit protein uS7 (156 aa).

The protein belongs to the universal ribosomal protein uS7 family. Part of the 30S ribosomal subunit. Contacts proteins S9 and S11.

In terms of biological role, one of the primary rRNA binding proteins, it binds directly to 16S rRNA where it nucleates assembly of the head domain of the 30S subunit. Is located at the subunit interface close to the decoding center, probably blocks exit of the E-site tRNA. The protein is Small ribosomal subunit protein uS7 of Staphylococcus saprophyticus subsp. saprophyticus (strain ATCC 15305 / DSM 20229 / NCIMB 8711 / NCTC 7292 / S-41).